The chain runs to 300 residues: N-acetylmuramic acid 6-phosphate etherase (300 aa).

The region spanning 57-220 (IAVAFQCGGR…TTGAMIRTGK (164 aa)) is the SIS domain. Glutamate 85 (proton donor) is an active-site residue. Residue glutamate 116 is part of the active site.

It belongs to the GCKR-like family. MurNAc-6-P etherase subfamily. Homodimer.

The enzyme catalyses N-acetyl-D-muramate 6-phosphate + H2O = N-acetyl-D-glucosamine 6-phosphate + (R)-lactate. It participates in amino-sugar metabolism; 1,6-anhydro-N-acetylmuramate degradation. Its pathway is amino-sugar metabolism; N-acetylmuramate degradation. It functions in the pathway cell wall biogenesis; peptidoglycan recycling. In terms of biological role, specifically catalyzes the cleavage of the D-lactyl ether substituent of MurNAc 6-phosphate, producing GlcNAc 6-phosphate and D-lactate. Together with AnmK, is also required for the utilization of anhydro-N-acetylmuramic acid (anhMurNAc) either imported from the medium or derived from its own cell wall murein, and thus plays a role in cell wall recycling. The chain is N-acetylmuramic acid 6-phosphate etherase from Aliivibrio salmonicida (strain LFI1238) (Vibrio salmonicida (strain LFI1238)).